Consider the following 200-residue polypeptide: Serotonin N-acetyltransferase 2, chloroplastic (200 aa).

A chloroplast-targeting transit peptide spans 1–41 (MQMQAARPRVGVRPRGGIRPFPLPTLSFNNNSNRSACACAC). Positions 55 to 195 (FAVRRSSTGL…MAFYRSRQQI (141 aa)) constitute an N-acetyltransferase domain.

Its subcellular location is the cytoplasm. It is found in the plastid. It localises to the chloroplast. It carries out the reaction serotonin + acetyl-CoA = N-acetylserotonin + CoA + H(+). The catalysed reaction is tyramine + acetyl-CoA = N-acetyltyramine + CoA + H(+). The enzyme catalyses tryptamine + acetyl-CoA = N-acetyltryptamine + CoA + H(+). It catalyses the reaction 5-methoxytryptamine + acetyl-CoA = melatonin + CoA + H(+). The protein operates within aromatic compound metabolism; melatonin biosynthesis; melatonin from serotonin: step 1/2. Catalyzes the N-acetylation of serotonin into N-acetylserotonin, the penultimate step in the synthesis of melatonin. Catalyzes in vitro the N-acetylation of tryptamine to produce N-acetyltryptamine, 5-methoxytryptamine to produce melatonin and tyramine to produce N-acetyltyramine. This chain is Serotonin N-acetyltransferase 2, chloroplastic, found in Oryza sativa subsp. japonica (Rice).